Consider the following 1073-residue polypeptide: Serine/threonine-protein kinase 11-interacting protein (1073 aa).

6 LRR repeats span residues 166–187 (ELQT…LQLL), 189–210 (ALRV…LTTL), 212–233 (ELEY…GIFS), 236–257 (KLLT…EQLV), 258–279 (NLQH…APLS), and 283–304 (YLKK…RSAT). 4 disordered regions span residues 389–409 (VKVR…SQAL), 455–533 (SRSA…EKPE), 724–817 (EVSS…QGMK), and 834–859 (MGSY…SEET). Acidic residues predominate over residues 515 to 532 (REEEADELMLGEEEDEKP). 2 stretches are compositionally biased toward polar residues: residues 779-788 (MDTSNSTRTP) and 843-859 (RGPT…SEET).

This sequence belongs to the STK11IP family.

It is found in the cytoplasm. The chain is Serine/threonine-protein kinase 11-interacting protein (STK11IP) from Gallus gallus (Chicken).